A 568-amino-acid chain; its full sequence is Type 2 DNA topoisomerase 6 subunit B (568 aa).

ATP contacts are provided by residues N46, D78, 99–100 (TK), 109–116 (GQQGIGIS), and K473.

This sequence belongs to the TOP6B family. As to quaternary structure, homodimer. Heterotetramer of two Top6A and two Top6B chains.

The catalysed reaction is ATP-dependent breakage, passage and rejoining of double-stranded DNA.. Relaxes both positive and negative superturns and exhibits a strong decatenase activity. In Pyrococcus furiosus (strain ATCC 43587 / DSM 3638 / JCM 8422 / Vc1), this protein is Type 2 DNA topoisomerase 6 subunit B.